The chain runs to 156 residues: Deoxyuridine 5'-triphosphate nucleotidohydrolase (156 aa).

Residues 76–78, Asn-89, 93–95, and Lys-103 contribute to the substrate site; these read RSG and TVD.

This sequence belongs to the dUTPase family. Requires Mg(2+) as cofactor.

The enzyme catalyses dUTP + H2O = dUMP + diphosphate + H(+). It participates in pyrimidine metabolism; dUMP biosynthesis; dUMP from dCTP (dUTP route): step 2/2. This enzyme is involved in nucleotide metabolism: it produces dUMP, the immediate precursor of thymidine nucleotides and it decreases the intracellular concentration of dUTP so that uracil cannot be incorporated into DNA. The protein is Deoxyuridine 5'-triphosphate nucleotidohydrolase of Rhizobium leguminosarum bv. trifolii (strain WSM2304).